The sequence spans 204 residues: Ubiquitin-conjugating enzyme E2 T (204 aa).

One can recognise a UBC core domain in the interval 2–152 (QRASRLKKEL…AKQWTEAHAR (151 aa)). Cysteine 86 (glycyl thioester intermediate) is an active-site residue. Residues lysine 91 and lysine 181 each participate in a glycyl lysine isopeptide (Lys-Gly) (interchain with G-Cter in ubiquitin) cross-link. The interval 150–204 (HARQKQKADEEELGTSSEVGDSEESHSTQKRKARPLGGMEKKFSPDVQRVYPGPS) is disordered. Glycyl lysine isopeptide (Lys-Gly) (interchain with G-Cter in SUMO2) cross-links involve residues lysine 190 and lysine 191. The residue at position 193 (serine 193) is a Phosphoserine.

The protein belongs to the ubiquitin-conjugating enzyme family. In terms of assembly, interacts with FANCL and BRCA1. Auto-ubiquitinated. Effects of auto-monoubiquitination at Lys-91 and Lys-181 are unclear.

The protein resides in the nucleus. The catalysed reaction is S-ubiquitinyl-[E1 ubiquitin-activating enzyme]-L-cysteine + [E2 ubiquitin-conjugating enzyme]-L-cysteine = [E1 ubiquitin-activating enzyme]-L-cysteine + S-ubiquitinyl-[E2 ubiquitin-conjugating enzyme]-L-cysteine.. The protein operates within protein modification; protein ubiquitination. Its function is as follows. Accepts ubiquitin from the E1 complex and catalyzes its covalent attachment to other proteins. Catalyzes monoubiquitination. Involved in mitomycin-C (MMC)-induced DNA repair: acts as a specific E2 ubiquitin-conjugating enzyme for the Fanconi anemia complex by associating with E3 ubiquitin-protein ligase FANCL and catalyzing monoubiquitination of FANCD2, a key step in the DNA damage pathway. Also mediates monoubiquitination of FANCL and FANCI. May contribute to ubiquitination and degradation of BRCA1. In vitro able to promote polyubiquitination using all 7 ubiquitin Lys residues, but may prefer 'Lys-11'-, 'Lys-27'-, 'Lys-48'- and 'Lys-63'-linked polyubiquitination. The polypeptide is Ubiquitin-conjugating enzyme E2 T (Ube2t) (Mus musculus (Mouse)).